Reading from the N-terminus, the 195-residue chain is Ras-related protein rac-2 (195 aa).

Residue glycine 10 to threonine 17 participates in GTP binding. The Effector region motif lies at tyrosine 32 to tyrosine 40. GTP is bound by residues aspartate 57–glutamine 61 and threonine 115–aspartate 118. The interval glycine 176–leucine 195 is disordered. Cysteine 192 is modified (cysteine methyl ester). The S-geranylgeranyl cysteine moiety is linked to residue cysteine 192. The propeptide at threonine 193–leucine 195 is removed in mature form.

It belongs to the small GTPase superfamily. Rho family.

Its subcellular location is the cell membrane. Functionally, during gonad morphogenesis, plays a role in distal tip cell (DTC)-mediated guidance of gonad elongation. This is Ras-related protein rac-2 (rac-2) from Caenorhabditis elegans.